The chain runs to 94 residues: Integration host factor subunit beta (94 aa).

It belongs to the bacterial histone-like protein family. As to quaternary structure, heterodimer of an alpha and a beta chain.

This protein is one of the two subunits of integration host factor, a specific DNA-binding protein that functions in genetic recombination as well as in transcriptional and translational control. The sequence is that of Integration host factor subunit beta from Yersinia pseudotuberculosis serotype O:1b (strain IP 31758).